The sequence spans 115 residues: Hydrogenase maturation factor HypA (115 aa).

His-2 is a Ni(2+) binding site. Cys-73, Cys-76, Cys-89, and Cys-92 together coordinate Zn(2+).

This sequence belongs to the HypA/HybF family.

Involved in the maturation of [NiFe] hydrogenases. Required for nickel insertion into the metal center of the hydrogenase. The polypeptide is Hydrogenase maturation factor HypA (Parabacteroides distasonis (strain ATCC 8503 / DSM 20701 / CIP 104284 / JCM 5825 / NCTC 11152)).